A 558-amino-acid chain; its full sequence is Putative ABC transporter ATP-binding protein SAG1633 (558 aa).

ABC transporter domains follow at residues 5-246 (IEWK…GIRE) and 295-527 (LSVQ…THLK). ATP-binding positions include 39-46 (GPSGSGKS) and 328-335 (GKNGAGKS).

The protein belongs to the ABC transporter superfamily.

It is found in the cell membrane. Functionally, probably part of an ABC transporter complex. Responsible for energy coupling to the transport system. This is Putative ABC transporter ATP-binding protein SAG1633 from Streptococcus agalactiae serotype V (strain ATCC BAA-611 / 2603 V/R).